The primary structure comprises 80 residues: Metallothionein-like protein BIF98 (80 aa).

The protein belongs to the metallothionein superfamily. Type 15 family.

Its function is as follows. Metallothioneins have a high content of cysteine residues that bind various heavy metals. The chain is Metallothionein-like protein BIF98 from Brassica rapa subsp. pekinensis (Chinese cabbage).